The chain runs to 481 residues: MSPQTETKTSVGFKAGVKDYKLTYYTPDYETKATDILAAFRVTPQPGVPPEEAGAAVAAESSTGTWTTVWTDGLTSLDRYKGRCYHIERVFGEKDQYIAYVAYPLDLFEEGSVTNMFTSIVGNVFGFKALRALRLEDLRIPAAYTKTFQGPPHGIQVERDKLNKYGRPLLGCTIKPKLGLSAKNYGRAVYECLRGGLDFTKDDENVNSQPFMRWRDRFLFCAEAIYKSQAETGEIKGHYLNATAGTCEEMLRRAYFAKELGVPIIMHDYLTGGFTANTSLAHFCRENGLLLHIHRAMHAVIDRQKNHGIHFRVLAKALRLSGGDHIHAGTVVGKLEGEREITLGFVDLLRDNFVEKDRSRGIYFTQDWVSLPGVLPVASGGIHVWHMPALTDIFGDDSVLQFGGGTLGHPWGNAPGAVANRVALEACVQARNEGLDLAQDGNSIIRQASKWSPELAAACEVWKEIQFNFKSVDTLDLNEIK.

The propeptide occupies 1–2 (MS). The residue at position 3 (P3) is an N-acetylproline. K14 bears the N6,N6,N6-trimethyllysine mark. Residues N123 and T173 each contribute to the substrate site. Catalysis depends on K175, which acts as the Proton acceptor. K177 contacts substrate. Positions 201, 203, and 204 each coordinate Mg(2+). K201 carries the N6-carboxylysine modification. The Proton acceptor role is filled by H294. Residues R295, H327, and S379 each contribute to the substrate site.

The protein belongs to the RuBisCO large chain family. Type I subfamily. Heterohexadecamer of 8 large chains and 8 small chains; disulfide-linked. The disulfide link is formed within the large subunit homodimers. The cofactor is Mg(2+). Post-translationally, the disulfide bond which can form in the large chain dimeric partners within the hexadecamer appears to be associated with oxidative stress and protein turnover.

Its subcellular location is the plastid. It catalyses the reaction 2 (2R)-3-phosphoglycerate + 2 H(+) = D-ribulose 1,5-bisphosphate + CO2 + H2O. The enzyme catalyses D-ribulose 1,5-bisphosphate + O2 = 2-phosphoglycolate + (2R)-3-phosphoglycerate + 2 H(+). In terms of biological role, ruBisCO catalyzes two reactions: the carboxylation of D-ribulose 1,5-bisphosphate, the primary event in carbon dioxide fixation, as well as the oxidative fragmentation of the pentose substrate in the photorespiration process. Both reactions occur simultaneously and in competition at the same active site. The sequence is that of Ribulose bisphosphate carboxylase large chain from Cuscuta obtusiflora (Peruvian dodder).